The sequence spans 89 residues: UPF0335 protein Caul_0876 (89 aa).

The protein belongs to the UPF0335 family.

In Caulobacter sp. (strain K31), this protein is UPF0335 protein Caul_0876.